The primary structure comprises 555 residues: Cyclin-T1.2 (555 aa).

Disordered stretches follow at residues 315-429 and 505-555; these read SYKG…NSSK and PADS…GELV. A compositionally biased stretch (low complexity) spans 321 to 335; the sequence is KPLSNSSDSPSTRPS. Residues 341-359 show a composition bias toward basic and acidic residues; the sequence is KNQKVVEQELMEQRMKEAA. Low complexity predominate over residues 382–398; it reads TSSSASNNSNHQNRSSS. A compositionally biased stretch (pro residues) spans 521–543; it reads PDEPSPPVSQILLPPPPPPPILP.

Belongs to the cyclin family. Cyclin C subfamily.

Its function is as follows. Regulatory subunit of the cyclin-dependent kinase pair (CDK9/cyclin T) complex, also called positive transcription elongation factor B (P-TEFb), which is proposed to facilitate the transition from abortive to production elongation by phosphorylating the CTD (carboxy-terminal domain) of the large subunit of RNA polymerase II (RNAP II). The chain is Cyclin-T1.2 (cit-1.2) from Caenorhabditis elegans.